A 335-amino-acid polypeptide reads, in one-letter code: Zinc-type alcohol dehydrogenase-like protein SAR2277 (335 aa).

The protein belongs to the zinc-containing alcohol dehydrogenase family. Quinone oxidoreductase subfamily.

The polypeptide is Zinc-type alcohol dehydrogenase-like protein SAR2277 (Staphylococcus aureus (strain MRSA252)).